The chain runs to 148 residues: Large ribosomal subunit protein bL9 (148 aa).

It belongs to the bacterial ribosomal protein bL9 family.

Binds to the 23S rRNA. The chain is Large ribosomal subunit protein bL9 from Heliobacterium modesticaldum (strain ATCC 51547 / Ice1).